The primary structure comprises 286 residues: Putative cyclin-H (286 aa).

In terms of domain architecture, Cyclin N-terminal spans 79–148 (AIIYIKRFYL…ILESLNFNLI (70 aa)). Residues 235–286 (NNNNNNNNNNNNNNNNNNNNNNNNNNNNNNNNNNNNNNNNNNNNNNNNNLLL) form a disordered region.

Belongs to the cyclin family. Cyclin C subfamily.

Its subcellular location is the nucleus. Its function is as follows. May regulate cdk7 involved in transcription regulation and cell cycle progression. This chain is Putative cyclin-H (cycH), found in Dictyostelium discoideum (Social amoeba).